A 948-amino-acid chain; its full sequence is Protein translocase subunit SecA (948 aa).

Residues Gln-90, 108–112 (GEGKT), and Asp-509 contribute to the ATP site.

This sequence belongs to the SecA family. Monomer and homodimer. Part of the essential Sec protein translocation apparatus which comprises SecA, SecYEG and auxiliary proteins SecDF. Other proteins may also be involved.

The protein resides in the cell inner membrane. The protein localises to the cellular thylakoid membrane. It localises to the cytoplasm. The catalysed reaction is ATP + H2O + cellular proteinSide 1 = ADP + phosphate + cellular proteinSide 2.. Part of the Sec protein translocase complex. Interacts with the SecYEG preprotein conducting channel. Has a central role in coupling the hydrolysis of ATP to the transfer of proteins into and across the cell membrane, serving as an ATP-driven molecular motor driving the stepwise translocation of polypeptide chains across the membrane. In terms of biological role, probably participates in protein translocation into and across both the cytoplasmic and thylakoid membranes in cyanobacterial cells. The sequence is that of Protein translocase subunit SecA from Prochlorococcus marinus (strain MIT 9313).